A 194-amino-acid polypeptide reads, in one-letter code: NADH-quinone oxidoreductase subunit B 1 (194 aa).

Residues 1–12 show a composition bias toward polar residues; it reads MGVTPVSNQPLV. The disordered stretch occupies residues 1-23; it reads MGVTPVSNQPLVAQQPKGIIDPS. Residues cysteine 73, cysteine 74, cysteine 138, and cysteine 168 each coordinate [4Fe-4S] cluster.

Belongs to the complex I 20 kDa subunit family. As to quaternary structure, NDH-1 is composed of 14 different subunits. Subunits NuoB, C, D, E, F, and G constitute the peripheral sector of the complex. Requires [4Fe-4S] cluster as cofactor.

It localises to the cell inner membrane. It catalyses the reaction a quinone + NADH + 5 H(+)(in) = a quinol + NAD(+) + 4 H(+)(out). Functionally, NDH-1 shuttles electrons from NADH, via FMN and iron-sulfur (Fe-S) centers, to quinones in the respiratory chain. The immediate electron acceptor for the enzyme in this species is believed to be ubiquinone. Couples the redox reaction to proton translocation (for every two electrons transferred, four hydrogen ions are translocated across the cytoplasmic membrane), and thus conserves the redox energy in a proton gradient. The polypeptide is NADH-quinone oxidoreductase subunit B 1 (Rhizobium etli (strain ATCC 51251 / DSM 11541 / JCM 21823 / NBRC 15573 / CFN 42)).